We begin with the raw amino-acid sequence, 292 residues long: Homoserine kinase (292 aa).

P84–A94 contacts ATP.

The protein belongs to the GHMP kinase family. Homoserine kinase subfamily.

It is found in the cytoplasm. The enzyme catalyses L-homoserine + ATP = O-phospho-L-homoserine + ADP + H(+). The protein operates within amino-acid biosynthesis; L-threonine biosynthesis; L-threonine from L-aspartate: step 4/5. Functionally, catalyzes the ATP-dependent phosphorylation of L-homoserine to L-homoserine phosphate. The polypeptide is Homoserine kinase (Campylobacter lari (strain RM2100 / D67 / ATCC BAA-1060)).